The chain runs to 188 residues: HTH-type transcriptional regulator Mb3439c (188 aa).

One can recognise an HTH tetR-type domain in the interval 17 to 77; it reads EEVAAAILQA…AVLDHLGTKL (61 aa). The H-T-H motif DNA-binding region spans 40 to 59; that stretch reads SIRDIAARSKVNHGLVFRHF.

Functionally, negatively regulates the expression of sulfate ester dioxygenase Mb3440 and its own expression. The chain is HTH-type transcriptional regulator Mb3439c from Mycobacterium bovis (strain ATCC BAA-935 / AF2122/97).